The following is a 743-amino-acid chain: Beta-galactosidase (743 aa).

The active-site Proton donor is the Glu-388. Glu-453 acts as the Nucleophile in catalysis.

Belongs to the glycosyl hydrolase 2 family. In terms of assembly, homodimer.

The enzyme catalyses Hydrolysis of terminal non-reducing beta-D-galactose residues in beta-D-galactosides.. In terms of biological role, beta-galactosidase. In Thermoanaerobacter pseudethanolicus (strain ATCC 33223 / 39E) (Clostridium thermohydrosulfuricum), this protein is Beta-galactosidase (lacZ).